A 1004-amino-acid polypeptide reads, in one-letter code: Presequence protease, mitochondrial (1004 aa).

Residues 1-34 (MLRNAAAGARKAVTELSQFPKPGEKLHGFTLVRS) constitute a mitochondrion transit peptide. H84 serves as a coordination point for Zn(2+). E87 serves as the catalytic Proton acceptor. H88 contacts Zn(2+). E160 is an active-site residue. Residue E188 participates in Zn(2+) binding.

This sequence belongs to the peptidase M16 family. PreP subfamily. As to quaternary structure, monomer and homodimer; homodimerization is induced by binding of the substrate. It depends on Zn(2+) as a cofactor.

The protein localises to the mitochondrion intermembrane space. The protein resides in the mitochondrion matrix. Functionally, degrades mitochondrial transit peptides after their cleavage in the intermembrane space or in the matrix, and presequence peptides; clearance of these peptides is required to keep the presequence processing machinery running. Preferentially cleaves the N-terminal side of paired basic amino acid residues. Also degrades other unstructured peptides. May function as an ATP-dependent peptidase as opposed to a metalloendopeptidase. The sequence is that of Presequence protease, mitochondrial (CYM1) from Gibberella zeae (strain ATCC MYA-4620 / CBS 123657 / FGSC 9075 / NRRL 31084 / PH-1) (Wheat head blight fungus).